The chain runs to 349 residues: Cytoplasmic tRNA 2-thiolation protein 2 (349 aa).

This sequence belongs to the CTU2/NCS2 family.

The protein localises to the cytoplasm. It participates in tRNA modification; 5-methoxycarbonylmethyl-2-thiouridine-tRNA biosynthesis. In terms of biological role, plays a central role in 2-thiolation of mcm(5)S(2)U at tRNA wobble positions of tRNA(Lys), tRNA(Glu) and tRNA(Gln). May act by forming a heterodimer with tut-1/ctu-1 that ligates sulfur from thiocarboxylated urm-1 onto the uridine of tRNAs at wobble position. In Caenorhabditis briggsae, this protein is Cytoplasmic tRNA 2-thiolation protein 2.